Here is an 81-residue protein sequence, read N- to C-terminus: Short neurotoxin 1 (81 aa).

Positions 1–21 are cleaved as a signal peptide; it reads MKTLLLTLVVVTIVCLDLGYT. Cystine bridges form between C24–C43, C38–C60, C62–C73, and C74–C79.

This sequence belongs to the three-finger toxin family. Short-chain subfamily. Type I alpha-neurotoxin sub-subfamily. As to expression, expressed by the venom gland.

The protein localises to the secreted. Binds to muscle nicotinic acetylcholine receptor (nAChR) and inhibit acetylcholine from binding to the receptor, thereby impairing neuromuscular transmission. The chain is Short neurotoxin 1 from Cryptophis nigrescens (Eastern small-eyed snake).